We begin with the raw amino-acid sequence, 204 residues long: Large ribosomal subunit protein bL25 (204 aa).

The protein belongs to the bacterial ribosomal protein bL25 family. CTC subfamily. Part of the 50S ribosomal subunit; part of the 5S rRNA/L5/L18/L25 subcomplex. Contacts the 5S rRNA. Binds to the 5S rRNA independently of L5 and L18.

Its function is as follows. This is one of the proteins that binds to the 5S RNA in the ribosome where it forms part of the central protuberance. The chain is Large ribosomal subunit protein bL25 from Pseudomonas aeruginosa (strain LESB58).